The primary structure comprises 234 residues: Putative N-acetylmannosamine-6-phosphate 2-epimerase (234 aa).

It belongs to the NanE family.

The enzyme catalyses an N-acyl-D-glucosamine 6-phosphate = an N-acyl-D-mannosamine 6-phosphate. It participates in amino-sugar metabolism; N-acetylneuraminate degradation; D-fructose 6-phosphate from N-acetylneuraminate: step 3/5. Converts N-acetylmannosamine-6-phosphate (ManNAc-6-P) to N-acetylglucosamine-6-phosphate (GlcNAc-6-P). The protein is Putative N-acetylmannosamine-6-phosphate 2-epimerase of Klebsiella pneumoniae (strain 342).